Reading from the N-terminus, the 78-residue chain is Large ribosomal subunit protein bL28 (78 aa).

Residues 1–21 (MARVCQVTGKGPMTGNNVSHA) form a disordered region.

This sequence belongs to the bacterial ribosomal protein bL28 family.

This chain is Large ribosomal subunit protein bL28, found in Bordetella petrii (strain ATCC BAA-461 / DSM 12804 / CCUG 43448).